Consider the following 436-residue polypeptide: MSNRKTKGNSAVHPECLSQVQRILRERFCHQSPHSNLFGVQVQYKHLIELLKRTAINGESNSVLIVGPRGSGKTMLINHALKELMEIREVSENVLQVHLNGLMQINDKIALTEITRQLNLENVVGDKVFGSFAENLSFLLEALKKGNRANSCPVIFILDEFDLFAHQKNQTLLYNLFDISQSAQTPVAVIGLTCRLDILELLEKRVKSRFSHRQIHLMNSFDFPQYMKIFKEQLSLPEEFPNKVFAERWNENTQSLSEDSTVREVLQKLFNVNKSLRSLHMLLMLALNRVTVSHPFMTSADLMEAQHLCSLDSKASIIHGLSVLEICLIIAMKHLNDIYEEEPFNFQMVYNEFQKFIQRKAHSVYNFEKPVVMKAFEHLQQLELIKPMERTSVNSQREYQLVKLLLDNTQIMNALQKYSNCPTDVRQWATSSLSWL.

Lysine 7 carries the post-translational modification N6-methyllysine. An ATP-binding site is contributed by 67-74 (GPRGSGKT).

This sequence belongs to the ORC4 family. In terms of assembly, component of ORC, a complex composed of at least 6 subunits: ORC1, ORC2, ORC3, ORC4, ORC5 and ORC6. ORC is regulated in a cell-cycle dependent manner. It is sequentially assembled at the exit from anaphase of mitosis and disassembled as cells enter S phase. Interacts with DBF4. Interacts with POLQ.

It localises to the nucleus. Component of the origin recognition complex (ORC) that binds origins of replication. DNA-binding is ATP-dependent. The specific DNA sequences that define origins of replication have not been identified yet. ORC is required to assemble the pre-replication complex necessary to initiate DNA replication. Binds histone H3 and H4 trimethylation marks H3K9me3, H3K27me3 and H4K20me3. The chain is Origin recognition complex subunit 4 (ORC4) from Cricetulus griseus (Chinese hamster).